The following is a 305-amino-acid chain: D-alanine--D-alanine ligase (305 aa).

Residues 107-299 (KVIFASAGLK…FGELVLRILQ (193 aa)) form the ATP-grasp domain. ATP is bound at residue 134 to 185 (PLPVVVKPSREGSSVGVGIVRDPSRMQAALDEAFRYDSEILIEGFIDGREVQ). 3 residues coordinate Mg(2+): Asp-253, Glu-266, and Asn-268.

This sequence belongs to the D-alanine--D-alanine ligase family. The cofactor is Mg(2+). It depends on Mn(2+) as a cofactor.

The protein localises to the cytoplasm. The enzyme catalyses 2 D-alanine + ATP = D-alanyl-D-alanine + ADP + phosphate + H(+). It participates in cell wall biogenesis; peptidoglycan biosynthesis. Functionally, cell wall formation. The sequence is that of D-alanine--D-alanine ligase from Citrifermentans bemidjiense (strain ATCC BAA-1014 / DSM 16622 / JCM 12645 / Bem) (Geobacter bemidjiensis).